Consider the following 249-residue polypeptide: Probable transcriptional regulatory protein Wbm0670 (249 aa).

The protein belongs to the TACO1 family.

The protein resides in the cytoplasm. This is Probable transcriptional regulatory protein Wbm0670 from Wolbachia sp. subsp. Brugia malayi (strain TRS).